The following is an 828-amino-acid chain: Periplasmic nitrate reductase (828 aa).

Residues 1–31 constitute a signal peptide (tat-type signal); the sequence is MKLSRRSFMKANAVAAAAAAAGLSVPGVARA. Residues 39-95 enclose the 4Fe-4S Mo/W bis-MGD-type domain; the sequence is IKWDKAPCRFCGTGCGVLVGTQQGRVVACQGDPDAPVNRGLNCIKGYFLPKIMYGKD. [4Fe-4S] cluster is bound by residues cysteine 46, cysteine 49, cysteine 53, and cysteine 81. Residues lysine 83, glutamine 150, asparagine 175, cysteine 179, 212–219, 243–247, 262–264, methionine 372, glutamine 376, asparagine 482, 508–509, lysine 531, aspartate 558, and 718–727 contribute to the Mo-bis(molybdopterin guanine dinucleotide) site; these read WGSNMAEM, STYQH, QSD, SD, and TGRVLEHWHT. Phenylalanine 794 is a binding site for substrate. 2 residues coordinate Mo-bis(molybdopterin guanine dinucleotide): asparagine 802 and lysine 819.

The protein belongs to the prokaryotic molybdopterin-containing oxidoreductase family. NasA/NapA/NarB subfamily. In terms of assembly, component of the periplasmic nitrate reductase NapAB complex composed of NapA and NapB. The cofactor is [4Fe-4S] cluster. Mo-bis(molybdopterin guanine dinucleotide) serves as cofactor. In terms of processing, predicted to be exported by the Tat system. The position of the signal peptide cleavage has not been experimentally proven.

The protein localises to the periplasm. It catalyses the reaction 2 Fe(II)-[cytochrome] + nitrate + 2 H(+) = 2 Fe(III)-[cytochrome] + nitrite + H2O. Catalytic subunit of the periplasmic nitrate reductase complex NapAB. Receives electrons from NapB and catalyzes the reduction of nitrate to nitrite. The protein is Periplasmic nitrate reductase of Escherichia coli O127:H6 (strain E2348/69 / EPEC).